The chain runs to 212 residues: Adenylate kinase (212 aa).

Position 14 to 19 (14 to 19) interacts with ATP; it reads GSGKGT. The tract at residues 34–63 is NMP; sequence STGDLFRKKISEDSQFAAQIQNYLSSGSYV. Residues Thr35, Arg40, 61 to 63, 89 to 92, and Gln96 contribute to the AMP site; these read SYV and GYPR. Positions 126–163 are LID; that stretch reads QRLFCQKCQKSYNLLLAKPKNELKCDLDSTDLITRNDD. ATP is bound at residue Arg127. Positions 130 and 133 each coordinate Zn(2+). An ATP-binding site is contributed by 136-137; the sequence is SY. 2 residues coordinate Zn(2+): Cys150 and Asp153. AMP-binding residues include Arg160 and Arg171. Gln199 provides a ligand contact to ATP.

Belongs to the adenylate kinase family. Monomer.

The protein localises to the cytoplasm. The enzyme catalyses AMP + ATP = 2 ADP. The protein operates within purine metabolism; AMP biosynthesis via salvage pathway; AMP from ADP: step 1/1. Catalyzes the reversible transfer of the terminal phosphate group between ATP and AMP. Plays an important role in cellular energy homeostasis and in adenine nucleotide metabolism. The polypeptide is Adenylate kinase (Mesomycoplasma hyopneumoniae (strain J / ATCC 25934 / NCTC 10110) (Mycoplasma hyopneumoniae)).